A 536-amino-acid chain; its full sequence is CTP synthase (536 aa).

Residues 1–267 (MSKFVFVTGG…CKETLNYLEL (267 aa)) form an amidoligase domain region. Ser13 lines the CTP pocket. Ser13 contacts UTP. ATP-binding positions include 14–19 (SIGKGI) and Asp71. 2 residues coordinate Mg(2+): Asp71 and Glu141. CTP contacts are provided by residues 148–150 (DIE), 188–193 (KTKPTQ), and Lys224. UTP contacts are provided by residues 188–193 (KTKPTQ) and Lys224. The Glutamine amidotransferase type-1 domain maps to 292 to 534 (KVALVGKYIE…IKASQDKLTQ (243 aa)). Gly354 is a binding site for L-glutamine. Cys381 (nucleophile; for glutamine hydrolysis) is an active-site residue. Residues 382–385 (LGMQ), Glu405, and Arg462 contribute to the L-glutamine site. Catalysis depends on residues His507 and Glu509.

This sequence belongs to the CTP synthase family. As to quaternary structure, homotetramer.

The catalysed reaction is UTP + L-glutamine + ATP + H2O = CTP + L-glutamate + ADP + phosphate + 2 H(+). The enzyme catalyses L-glutamine + H2O = L-glutamate + NH4(+). It carries out the reaction UTP + NH4(+) + ATP = CTP + ADP + phosphate + 2 H(+). It functions in the pathway pyrimidine metabolism; CTP biosynthesis via de novo pathway; CTP from UDP: step 2/2. With respect to regulation, allosterically activated by GTP, when glutamine is the substrate; GTP has no effect on the reaction when ammonia is the substrate. The allosteric effector GTP functions by stabilizing the protein conformation that binds the tetrahedral intermediate(s) formed during glutamine hydrolysis. Inhibited by the product CTP, via allosteric rather than competitive inhibition. Its function is as follows. Catalyzes the ATP-dependent amination of UTP to CTP with either L-glutamine or ammonia as the source of nitrogen. Regulates intracellular CTP levels through interactions with the four ribonucleotide triphosphates. The chain is CTP synthase from Prochlorococcus marinus (strain MIT 9301).